The following is a 148-amino-acid chain: Lysozyme C (148 aa).

Positions 1-18 are cleaved as a signal peptide; sequence MKVLIILGLVLLSVMVQG. A C-type lysozyme domain is found at 19 to 148; that stretch reads KVFERCELAR…VSQYVQGCGV (130 aa). Disulfide bonds link cysteine 24-cysteine 146, cysteine 48-cysteine 134, cysteine 83-cysteine 99, and cysteine 95-cysteine 113. Catalysis depends on residues glutamate 53 and aspartate 71.

This sequence belongs to the glycosyl hydrolase 22 family. In terms of assembly, monomer.

The enzyme catalyses Hydrolysis of (1-&gt;4)-beta-linkages between N-acetylmuramic acid and N-acetyl-D-glucosamine residues in a peptidoglycan and between N-acetyl-D-glucosamine residues in chitodextrins.. Functionally, lysozymes have primarily a bacteriolytic function; those in tissues and body fluids are associated with the monocyte-macrophage system and enhance the activity of immunoagents. The protein is Lysozyme C (LYZ) of Callithrix jacchus (White-tufted-ear marmoset).